Reading from the N-terminus, the 448-residue chain is MSFTPGKQSSSRASSGNRSGNGILKWADQSDQVRNVQTRGRRAQPKQTATSQQPSGGNVVPYYSWFSGITQFQKGKEFEFVEGQGPPIAPGVPATEAKGYWYRHNRGSFKTADGNQRQLLPRWYFYYLGTGPHAKDQYGTDIDGVYWVASNQADVNTPADIVDRDPSSDEAIPTRFPPGTVLPQGYYIEGSGRSAPNSRSTSRTSSRASSAGSRSRANSGNRTPTSGVTPDMADQIASLVLAKLGKDATKPQQVTKHTAKEVRQKILNKPRQKRSPNKQCTVQQCFGKRGPNQNFGGGEMLKLGTSDPQFPILAELAPTAGAFFFGSRLELAKVQNLSGNPDEPQKDVYELRYNGAIRFDSTLSGFETIMKVLNENLNAYQQQDGMMNMSPKPQRQRGHKNGQGENDNISVAVPKSRVQQNKSRELTAEDISLLKKMDEPYTEDTSEI.

Residues M1 to S55 form a disordered region. The span at S9–G22 shows a compositional bias: low complexity. 2 stretches are compositionally biased toward polar residues: residues Q29–T38 and P45–S55. Residues Q52–S194 form an RNA-binding region. The CoV N NTD domain maps to P61–G190. 3 residues coordinate RNA: R106, R122, and R164. 3 disordered regions span residues P158–D231, I266–Q293, and G385–I448. Residue S167 is modified to Phosphoserine; by host. Position 174 is a phosphothreonine; by host (T174). S191 is subject to Phosphoserine; by host. Positions R193–T223 are enriched in low complexity. The CoV N CTD domain maps to A259–D384. A compositionally biased stretch (basic residues) spans I266–P276. A dimerization region spans residues I266 to D384. Phosphoserine; by host is present on residues S390 and S423. Residues K422 to E439 are compositionally biased toward basic and acidic residues. A Phosphothreonine; by host modification is found at T427.

This sequence belongs to the betacoronavirus nucleocapsid protein family. In terms of assembly, homooligomer. Both monomeric and oligomeric forms interact with RNA. Interacts with protein M. Interacts with NSP3; this interaction serves to tether the genome to the newly translated replicase-transcriptase complex at a very early stage of infection. Post-translationally, ADP-ribosylated. The ADP-ribosylation is retained in the virion during infection. Phosphorylated on serine and threonine residues. In terms of processing, proteolytically cleaved by host CASP6. The cleavage leads to two fragments and facilitates viral replication by inhibiting host IFN signaling. The two fragments may interact with IRF3 inhibiting its nuclear translocation after activation and reduce the expression of IFNB and IFN-stimulated genes.

The protein resides in the virion. The protein localises to the host endoplasmic reticulum-Golgi intermediate compartment. It localises to the host Golgi apparatus. Its function is as follows. Packages the positive strand viral genome RNA into a helical ribonucleocapsid (RNP) and plays a fundamental role during virion assembly through its interactions with the viral genome and membrane protein M. Plays an important role in enhancing the efficiency of subgenomic viral RNA transcription as well as viral replication. Attenuates the stress granules formation by reducing host G3BP1 access to host mRNAs under stress conditions. This chain is Nucleoprotein, found in Homo sapiens (Human).